Here is a 188-residue protein sequence, read N- to C-terminus: Ribosome-recycling factor (188 aa).

This sequence belongs to the RRF family.

The protein resides in the cytoplasm. Responsible for the release of ribosomes from messenger RNA at the termination of protein biosynthesis. May increase the efficiency of translation by recycling ribosomes from one round of translation to another. This Caulobacter sp. (strain K31) protein is Ribosome-recycling factor.